The following is a 181-amino-acid chain: Adenylate kinase (181 aa).

An ATP-binding site is contributed by 10-15 (GAGKGT). The NMP stretch occupies residues 30–59 (STGELFRKNIQDGTKLGIEAKRYLDAGDLV). AMP-binding positions include threonine 31, arginine 36, 57 to 59 (DLV), 85 to 88 (GYPR), and glutamine 92. Positions 126 to 132 (GRGRADD) are LID. Arginine 127 lines the ATP pocket. AMP contacts are provided by arginine 129 and arginine 140. Glycine 166 lines the ATP pocket.

It belongs to the adenylate kinase family. As to quaternary structure, monomer.

Its subcellular location is the cytoplasm. It carries out the reaction AMP + ATP = 2 ADP. It functions in the pathway purine metabolism; AMP biosynthesis via salvage pathway; AMP from ADP: step 1/1. Catalyzes the reversible transfer of the terminal phosphate group between ATP and AMP. Plays an important role in cellular energy homeostasis and in adenine nucleotide metabolism. The polypeptide is Adenylate kinase (Mycobacterium marinum (strain ATCC BAA-535 / M)).